Here is a 103-residue protein sequence, read N- to C-terminus: Co-chaperonin GroES (103 aa).

It belongs to the GroES chaperonin family. As to quaternary structure, heptamer of 7 subunits arranged in a ring. Interacts with the chaperonin GroEL.

The protein localises to the cytoplasm. In terms of biological role, together with the chaperonin GroEL, plays an essential role in assisting protein folding. The GroEL-GroES system forms a nano-cage that allows encapsulation of the non-native substrate proteins and provides a physical environment optimized to promote and accelerate protein folding. GroES binds to the apical surface of the GroEL ring, thereby capping the opening of the GroEL channel. This is Co-chaperonin GroES from Prochlorococcus marinus (strain MIT 9515).